We begin with the raw amino-acid sequence, 1011 residues long: Vacuolar membrane protease (1011 aa).

Residues 1–14 (MKLTKAVFRFRRTN) lie on the Cytoplasmic side of the membrane. The chain crosses the membrane as a helical span at residues 15-35 (LSTLLVITYLVITTLYVWDHF). Residues 36–352 (RYHFTLPSDY…WFVVWSARSL (317 aa)) lie on the Vacuolar side of the membrane. Residues H149, D161, E194, E219, and H293 each coordinate Zn(2+). A helical membrane pass occupies residues 353-373 (FYWNCIILALFPSILAILFLV). Topologically, residues 374–390 (AYDMQLLKFNFWDAMLR) are cytoplasmic. The chain crosses the membrane as a helical span at residues 391 to 411 (LPVSVCLAYFCVKLFQVLVGQ). Residues 412–420 (LNPYVFSRD) lie on the Vacuolar side of the membrane. Residues 421–441 (YVSPILAEASMFIFMNYVILS) traverse the membrane as a helical segment. Topologically, residues 442 to 451 (SWERLRPLRD) are cytoplasmic. Residues 452–472 (FKTVALVEVSMVLWIYLISVT) form a helical membrane-spanning segment. Topologically, residues 473 to 487 (RWLRDSDYTATGLYP) are vacuolar. Residues 488 to 508 (FTIGYTFVSIGAIIGVFCATF) form a helical membrane-spanning segment. Residues 509–647 (KAKLNPEDDS…SILNYDWSIQ (139 aa)) are Cytoplasmic-facing. The interval 534–585 (MQHQYQQHSQKHSNQHSPHHSTHHSAQHSVHHSPRQSIHQVPSSEQRQRDAS) is disordered. A compositionally biased stretch (basic residues) spans 542–567 (SQKHSNQHSPHHSTHHSAQHSVHHSP). Polar residues predominate over residues 568–578 (RQSIHQVPSSE). The helical transmembrane segment at 648-668 (FMVVTPWVTYFTWICLDLIMG) threads the bilayer. The Vacuolar portion of the chain corresponds to 669-681 (AMNQTIQESAKGT). Residue N671 is glycosylated (N-linked (GlcNAc...) asparagine). Residues 682 to 702 (TFVTHMALIGSLLLSLPMLPF) traverse the membrane as a helical segment. Residues 703-708 (TYKLHS) are Cytoplasmic-facing. A helical membrane pass occupies residues 709-729 (FAGMLFLLLAVTTAVWTIVAP). The Vacuolar segment spans residues 730-1011 (PFTESSPLKL…MVSVTKYVEL (282 aa)). N751, N825, and N854 each carry an N-linked (GlcNAc...) asparagine glycan.

Belongs to the peptidase M28 family. Requires Zn(2+) as cofactor.

The protein localises to the vacuole membrane. Its function is as follows. May be involved in vacuolar sorting and osmoregulation. The protein is Vacuolar membrane protease of Eremothecium gossypii (strain ATCC 10895 / CBS 109.51 / FGSC 9923 / NRRL Y-1056) (Yeast).